Here is a 263-residue protein sequence, read N- to C-terminus: 4-hydroxy-2-oxo-heptane-1,7-dioate aldolase (263 aa).

The active-site Proton acceptor is the His-45. Gln-147 is a substrate binding site. A divalent metal cation is bound at residue Glu-149. The substrate site is built by Ala-174 and Asp-175. Asp-175 serves as a coordination point for a divalent metal cation.

It belongs to the HpcH/HpaI aldolase family. As to quaternary structure, homohexamer; trimer of dimers. A divalent metal cation is required as a cofactor.

It catalyses the reaction 4-hydroxy-2-oxoheptanedioate = succinate semialdehyde + pyruvate. It participates in aromatic compound metabolism; 4-hydroxyphenylacetate degradation; pyruvate and succinate semialdehyde from 4-hydroxyphenylacetate: step 7/7. In terms of biological role, catalyzes the reversible retro-aldol cleavage of 4-hydroxy-2-ketoheptane-1,7-dioate (HKHD) to pyruvate and succinic semialdehyde. This Salmonella typhimurium (strain LT2 / SGSC1412 / ATCC 700720) protein is 4-hydroxy-2-oxo-heptane-1,7-dioate aldolase.